The following is an 82-amino-acid chain: Small ribosomal subunit protein bS16 (82 aa).

The protein belongs to the bacterial ribosomal protein bS16 family.

This chain is Small ribosomal subunit protein bS16, found in Acidobacterium capsulatum (strain ATCC 51196 / DSM 11244 / BCRC 80197 / JCM 7670 / NBRC 15755 / NCIMB 13165 / 161).